Reading from the N-terminus, the 412-residue chain is Multifunctional CCA protein (412 aa).

The ATP site is built by G8 and R11. CTP is bound by residues G8 and R11. Residues D21 and D23 each contribute to the Mg(2+) site. 3 residues coordinate ATP: R91, R137, and R140. Residues R91, R137, and R140 each coordinate CTP. The HD domain occupies 228-329 (TGIHTLMTLS…VKLFDSIDAW (102 aa)).

It belongs to the tRNA nucleotidyltransferase/poly(A) polymerase family. Bacterial CCA-adding enzyme type 1 subfamily. In terms of assembly, monomer. Can also form homodimers and oligomers. The cofactor is Mg(2+). Ni(2+) is required as a cofactor.

The enzyme catalyses a tRNA precursor + 2 CTP + ATP = a tRNA with a 3' CCA end + 3 diphosphate. The catalysed reaction is a tRNA with a 3' CCA end + 2 CTP + ATP = a tRNA with a 3' CCACCA end + 3 diphosphate. Its function is as follows. Catalyzes the addition and repair of the essential 3'-terminal CCA sequence in tRNAs without using a nucleic acid template. Adds these three nucleotides in the order of C, C, and A to the tRNA nucleotide-73, using CTP and ATP as substrates and producing inorganic pyrophosphate. tRNA 3'-terminal CCA addition is required both for tRNA processing and repair. Also involved in tRNA surveillance by mediating tandem CCA addition to generate a CCACCA at the 3' terminus of unstable tRNAs. While stable tRNAs receive only 3'-terminal CCA, unstable tRNAs are marked with CCACCA and rapidly degraded. This chain is Multifunctional CCA protein, found in Escherichia coli (strain K12 / MC4100 / BW2952).